Reading from the N-terminus, the 142-residue chain is MKTISANSQTVKRDWYIIDAEGKTLGRMAAEIAHRLRGKHKPEYTPHVDTGDYIVVINAEKVRVTGNKAKDKMYHHHTGYIGGLKSISFEKLIQKAPERTIETAVKGMLPKGPLGRAMFKKLKVYAGESHPHTAQQPQALNV.

The protein belongs to the universal ribosomal protein uL13 family. Part of the 50S ribosomal subunit.

This protein is one of the early assembly proteins of the 50S ribosomal subunit, although it is not seen to bind rRNA by itself. It is important during the early stages of 50S assembly. This is Large ribosomal subunit protein uL13 from Teredinibacter turnerae (strain ATCC 39867 / T7901).